Consider the following 463-residue polypeptide: Elongation factor 1-alpha (463 aa).

G2 is subject to N,N,N-trimethylglycine. K3 carries the post-translational modification N6,N6-dimethyllysine; alternate. An N6-methyllysine; alternate modification is found at K3. The tr-type G domain occupies 5-239; the sequence is KNHVNVVVIG…DAIEPPSRPT (235 aa). Residues 14–21 are G1; sequence GHVDSGKS. 14–21 contacts GTP; that stretch reads GHVDSGKS. K30 bears the N6-methyllysine mark. Residues 70–74 are G2; it reads GITID. K79 carries the N6,N6,N6-trimethyllysine modification. The tract at residues 91–94 is G3; that stretch reads DAPG. Residues 91-95 and 153-156 each bind GTP; these read DAPGH and NKMD. The G4 stretch occupies residues 153-156; sequence NKMD. Residues 191-193 form a G5 region; the sequence is SGW. N6,N6-dimethyllysine; alternate is present on K315. K315 carries the N6-methyllysine; alternate modification. K389 is subject to N6-methyllysine.

This sequence belongs to the TRAFAC class translation factor GTPase superfamily. Classic translation factor GTPase family. EF-Tu/EF-1A subfamily.

The protein resides in the cytoplasm. This protein promotes the GTP-dependent binding of aminoacyl-tRNA to the A-site of ribosomes during protein biosynthesis. The chain is Elongation factor 1-alpha (TEF) from Puccinia graminis (Black stem rust fungus).